Consider the following 394-residue polypeptide: uncharacterized protein (394 aa).

11 consecutive transmembrane segments (helical) span residues 10–30, 50–70, 79–99, 100–120, 138–158, 166–186, 218–238, 243–263, 291–311, 337–357, and 364–384; these read PALI…NYYA, FIVT…VPLG, IVSM…SQSL, AMMI…QILV, TIMS…GLLA, VFWV…RGLP, LLGC…AFLL, FNYS…GALG, WLAI…ILVL, LTAG…LISA, and GWAG…LVWW.

This sequence belongs to the major facilitator superfamily.

It is found in the cell inner membrane. This is an uncharacterized protein from Escherichia coli (strain K12).